The chain runs to 230 residues: NAD(P)H-hydrate epimerase (230 aa).

One can recognise a YjeF N-terminal domain in the interval 11–218; sequence AIAVDQELFN…ALQRKYELNL (208 aa). 61-65 serves as a coordination point for (6S)-NADPHX; the sequence is NNGGD. K(+) is bound by residues asparagine 62 and aspartate 126. Residues 130–136 and aspartate 159 each bind (6S)-NADPHX; that span reads GFSFKPP. Serine 162 is a K(+) binding site.

The protein belongs to the NnrE/AIBP family. The cofactor is K(+).

It catalyses the reaction (6R)-NADHX = (6S)-NADHX. The catalysed reaction is (6R)-NADPHX = (6S)-NADPHX. In terms of biological role, catalyzes the epimerization of the S- and R-forms of NAD(P)HX, a damaged form of NAD(P)H that is a result of enzymatic or heat-dependent hydration. This is a prerequisite for the S-specific NAD(P)H-hydrate dehydratase to allow the repair of both epimers of NAD(P)HX. The protein is NAD(P)H-hydrate epimerase of Drosophila melanogaster (Fruit fly).